A 276-amino-acid chain; its full sequence is Diaminopimelate epimerase (276 aa).

N13, Q46, and N66 together coordinate substrate. The active-site Proton donor is C75. Substrate is bound by residues 76–77, N159, N192, and 210–211; these read GN and ER. C219 acts as the Proton acceptor in catalysis. Residue 220–221 coordinates substrate; sequence GS.

This sequence belongs to the diaminopimelate epimerase family. As to quaternary structure, homodimer.

It localises to the cytoplasm. It catalyses the reaction (2S,6S)-2,6-diaminopimelate = meso-2,6-diaminopimelate. It participates in amino-acid biosynthesis; L-lysine biosynthesis via DAP pathway; DL-2,6-diaminopimelate from LL-2,6-diaminopimelate: step 1/1. Functionally, catalyzes the stereoinversion of LL-2,6-diaminopimelate (L,L-DAP) to meso-diaminopimelate (meso-DAP), a precursor of L-lysine and an essential component of the bacterial peptidoglycan. The sequence is that of Diaminopimelate epimerase from Vibrio parahaemolyticus serotype O3:K6 (strain RIMD 2210633).